A 140-amino-acid polypeptide reads, in one-letter code: Translation initiation factor 2 subunit beta (140 aa).

This sequence belongs to the eIF-2-beta/eIF-5 family. In terms of assembly, heterotrimer composed of an alpha, a beta and a gamma chain.

In terms of biological role, eIF-2 functions in the early steps of protein synthesis by forming a ternary complex with GTP and initiator tRNA. This Pyrococcus furiosus (strain ATCC 43587 / DSM 3638 / JCM 8422 / Vc1) protein is Translation initiation factor 2 subunit beta.